Here is a 35-residue protein sequence, read N- to C-terminus: Photosystem II reaction center protein M (35 aa).

The residue at position 1 (Met-1) is an N-formylmethionine. Residues 7 to 28 (GFIASILFVLVPTVFLLILFIQ) traverse the membrane as a helical segment.

It belongs to the PsbM family. In terms of assembly, PSII is composed of 1 copy each of membrane proteins PsbA, PsbB, PsbC, PsbD, PsbE, PsbF, PsbH, PsbI, PsbJ, PsbK, PsbL, PsbM, PsbT, PsbX, PsbY, PsbZ, Psb30/Ycf12, peripheral proteins PsbO, CyanoQ (PsbQ), PsbU, PsbV and a large number of cofactors. It forms dimeric complexes.

The protein resides in the cellular thylakoid membrane. One of the components of the core complex of photosystem II (PSII). PSII is a light-driven water:plastoquinone oxidoreductase that uses light energy to abstract electrons from H(2)O, generating O(2) and a proton gradient subsequently used for ATP formation. It consists of a core antenna complex that captures photons, and an electron transfer chain that converts photonic excitation into a charge separation. This subunit is found at the monomer-monomer interface. Involved in assembly of monomeric PSII from the CP43-less intermediate. The sequence is that of Photosystem II reaction center protein M from Synechocystis sp. (strain ATCC 27184 / PCC 6803 / Kazusa).